We begin with the raw amino-acid sequence, 328 residues long: dITP/XTP pyrophosphatase (328 aa).

The unknown stretch occupies residues 1–129; the sequence is MSEKIYEYKD…ATSEQGFGDI (129 aa). Positions 130 to 324 are NTP pyrophosphatase; that stretch reads ILIATRNEGK…KLMEVFPAWQ (195 aa). Position 134-139 (134-139) interacts with substrate; it reads TRNEGK. Catalysis depends on D196, which acts as the Proton acceptor. D196 contributes to the Mg(2+) binding site. Residues S197, 280–283, K303, and 308–309 contribute to the substrate site; these read FGYD and HR.

This sequence belongs to the HAM1 NTPase family. Homodimer. Requires Mg(2+) as cofactor.

The enzyme catalyses XTP + H2O = XMP + diphosphate + H(+). It catalyses the reaction dITP + H2O = dIMP + diphosphate + H(+). The catalysed reaction is ITP + H2O = IMP + diphosphate + H(+). Pyrophosphatase that catalyzes the hydrolysis of nucleoside triphosphates to their monophosphate derivatives, with a high preference for the non-canonical purine nucleotides XTP (xanthosine triphosphate), dITP (deoxyinosine triphosphate) and ITP. Seems to function as a house-cleaning enzyme that removes non-canonical purine nucleotides from the nucleotide pool, thus preventing their incorporation into DNA/RNA and avoiding chromosomal lesions. The chain is dITP/XTP pyrophosphatase from Streptococcus pyogenes serotype M1.